A 212-amino-acid chain; its full sequence is Holliday junction branch migration complex subunit RuvA (212 aa).

The interval 1–66 (MISGLKGTLK…ERGQKLFGFL (66 aa)) is domain I. The segment at 67–145 (TEQDKEFFKV…KLELFLSGTS (79 aa)) is domain II. The tract at residues 146–162 (KEPSISLSSFSETPEEA) is flexible linker. Residues 163-212 (ALSRKREIAILGLVQLGFEEKTASKEVDKILKSSSPTDPGEIIREILKSL) form a domain III region.

It belongs to the RuvA family. In terms of assembly, homotetramer. Forms an RuvA(8)-RuvB(12)-Holliday junction (HJ) complex. HJ DNA is sandwiched between 2 RuvA tetramers; dsDNA enters through RuvA and exits via RuvB. An RuvB hexamer assembles on each DNA strand where it exits the tetramer. Each RuvB hexamer is contacted by two RuvA subunits (via domain III) on 2 adjacent RuvB subunits; this complex drives branch migration. In the full resolvosome a probable DNA-RuvA(4)-RuvB(12)-RuvC(2) complex forms which resolves the HJ.

It localises to the cytoplasm. The RuvA-RuvB-RuvC complex processes Holliday junction (HJ) DNA during genetic recombination and DNA repair, while the RuvA-RuvB complex plays an important role in the rescue of blocked DNA replication forks via replication fork reversal (RFR). RuvA specifically binds to HJ cruciform DNA, conferring on it an open structure. The RuvB hexamer acts as an ATP-dependent pump, pulling dsDNA into and through the RuvAB complex. HJ branch migration allows RuvC to scan DNA until it finds its consensus sequence, where it cleaves and resolves the cruciform DNA. This Leptospira borgpetersenii serovar Hardjo-bovis (strain JB197) protein is Holliday junction branch migration complex subunit RuvA.